A 269-amino-acid polypeptide reads, in one-letter code: Energy-coupling factor transporter ATP-binding protein EcfA1 (269 aa).

The 235-residue stretch at 8 to 242 (IVFKNVSFQY…AEGLTTIGLD (235 aa)) folds into the ABC transporter domain. Residue 42–49 (GHNGSGKS) coordinates ATP.

The protein belongs to the ABC transporter superfamily. Energy-coupling factor EcfA family. Forms a stable energy-coupling factor (ECF) transporter complex composed of 2 membrane-embedded substrate-binding proteins (S component), 2 ATP-binding proteins (A component) and 2 transmembrane proteins (T component).

It is found in the cell membrane. ATP-binding (A) component of a common energy-coupling factor (ECF) ABC-transporter complex. Unlike classic ABC transporters this ECF transporter provides the energy necessary to transport a number of different substrates. The chain is Energy-coupling factor transporter ATP-binding protein EcfA1 from Staphylococcus aureus (strain bovine RF122 / ET3-1).